Consider the following 805-residue polypeptide: Leucine--tRNA ligase (805 aa).

The short motif at 40 to 51 is the 'HIGH' region element; it reads PYPSGAGLHVGH. Residues 576–580 carry the 'KMSKS' region motif; the sequence is KMSKS. Lys579 contacts ATP.

This sequence belongs to the class-I aminoacyl-tRNA synthetase family.

Its subcellular location is the cytoplasm. It carries out the reaction tRNA(Leu) + L-leucine + ATP = L-leucyl-tRNA(Leu) + AMP + diphosphate. The polypeptide is Leucine--tRNA ligase (Anoxybacillus flavithermus (strain DSM 21510 / WK1)).